The chain runs to 276 residues: Large ribosomal subunit protein uL2 (276 aa).

2 disordered regions span residues 1–61 and 224–276; these read MALK…HKQK and AMNP…KKKN. Basic and acidic residues predominate over residues 15 to 31; the sequence is GRIDLRKDEITAQKPEK.

It belongs to the universal ribosomal protein uL2 family. As to quaternary structure, part of the 50S ribosomal subunit. Forms a bridge to the 30S subunit in the 70S ribosome.

In terms of biological role, one of the primary rRNA binding proteins. Required for association of the 30S and 50S subunits to form the 70S ribosome, for tRNA binding and peptide bond formation. It has been suggested to have peptidyltransferase activity; this is somewhat controversial. Makes several contacts with the 16S rRNA in the 70S ribosome. The polypeptide is Large ribosomal subunit protein uL2 (Treponema denticola (strain ATCC 35405 / DSM 14222 / CIP 103919 / JCM 8153 / KCTC 15104)).